We begin with the raw amino-acid sequence, 258 residues long: Deoxyribose-phosphate aldolase (258 aa).

Asp-102 functions as the Proton donor/acceptor in the catalytic mechanism. Lys-165 acts as the Schiff-base intermediate with acetaldehyde in catalysis. Lys-199 serves as the catalytic Proton donor/acceptor.

Belongs to the DeoC/FbaB aldolase family. DeoC type 2 subfamily.

It is found in the cytoplasm. The catalysed reaction is 2-deoxy-D-ribose 5-phosphate = D-glyceraldehyde 3-phosphate + acetaldehyde. Its pathway is carbohydrate degradation; 2-deoxy-D-ribose 1-phosphate degradation; D-glyceraldehyde 3-phosphate and acetaldehyde from 2-deoxy-alpha-D-ribose 1-phosphate: step 2/2. Functionally, catalyzes a reversible aldol reaction between acetaldehyde and D-glyceraldehyde 3-phosphate to generate 2-deoxy-D-ribose 5-phosphate. In Vibrio vulnificus (strain CMCP6), this protein is Deoxyribose-phosphate aldolase.